A 466-amino-acid polypeptide reads, in one-letter code: Ribulose bisphosphate carboxylase large chain (466 aa).

Residue K5 is modified to N6,N6,N6-trimethyllysine. Positions 114 and 164 each coordinate substrate. K166 serves as the catalytic Proton acceptor. Residue K168 coordinates substrate. Mg(2+) is bound by residues K192, D194, and E195. An N6-carboxylysine modification is found at K192. The active-site Proton acceptor is H285. The substrate site is built by R286, H318, and S370.

The protein belongs to the RuBisCO large chain family. Type I subfamily. As to quaternary structure, heterohexadecamer of 8 large chains and 8 small chains; disulfide-linked. The disulfide link is formed within the large subunit homodimers. Requires Mg(2+) as cofactor. The disulfide bond which can form in the large chain dimeric partners within the hexadecamer appears to be associated with oxidative stress and protein turnover.

It localises to the plastid. The protein localises to the chloroplast. It catalyses the reaction 2 (2R)-3-phosphoglycerate + 2 H(+) = D-ribulose 1,5-bisphosphate + CO2 + H2O. The catalysed reaction is D-ribulose 1,5-bisphosphate + O2 = 2-phosphoglycolate + (2R)-3-phosphoglycerate + 2 H(+). Functionally, ruBisCO catalyzes two reactions: the carboxylation of D-ribulose 1,5-bisphosphate, the primary event in carbon dioxide fixation, as well as the oxidative fragmentation of the pentose substrate in the photorespiration process. Both reactions occur simultaneously and in competition at the same active site. The protein is Ribulose bisphosphate carboxylase large chain of Isophysis tasmanica.